We begin with the raw amino-acid sequence, 202 residues long: Syndecan-4 (202 aa).

The N-terminal stretch at 1-22 (MASPRLLALLLLLVGAFNAAAA) is a signal peptide. Over 23–152 (ESIRETEVIN…NIFERTEVLS (130 aa)) the chain is Extracellular. 2 disordered regions span residues 41-75 (YFSG…GPED) and 87-112 (VPLD…ELEE). An O-linked (Xyl...) (glycosaminoglycan) serine glycan is attached at Ser-43. The segment covering 46–63 (LPDDEDVGGPGQEPDDFE) has biased composition (acidic residues). Residues Ser-65 and Ser-67 are each glycosylated (O-linked (Xyl...) (glycosaminoglycan) serine). The helical transmembrane segment at 153 to 173 (ALIVGGIVGILFAVFLVLLLV) threads the bilayer. The Cytoplasmic segment spans residues 174–202 (YRMKKKDEGSYDLGKKPIYKKAPTNEFYA).

Belongs to the syndecan proteoglycan family. In terms of assembly, homodimer. Interacts with CDCP1 and SDCBP. Interacts (via its cytoplasmic domain) with GIPC (via its PDZ domain). Interacts (via its cytoplasmic domain) with NUDT16L1. Interacts with DNM2; this interaction is markedly enhanced at focal ahesion site upon induction of focal adhesions and stress-fiber formation. In terms of processing, shedding, cleavage of the extracellular domain to release a soluble form, is enhanced by a number of factors such as heparanase, growth factor receptor action for example by thrombin or EGF. Physiological events such as stress or wound healing can activate the shedding. PMA-mediated shedding is inhibited by TIMP3. O-glycosylated; contains both chondroitin sulfate and heparan sulfate. Ser-43, Ser-65 and Ser-67 can all be modified by either chondroitin sulfate or heparan sulfate, and the protein exists in forms that contain only chondroitin sulfate, only heparan sulfate and both chondroitin sulfate and heparan sulfate.

It is found in the membrane. The protein localises to the secreted. In terms of biological role, cell surface proteoglycan which regulates exosome biogenesis in concert with SDCBP and PDCD6IP. The polypeptide is Syndecan-4 (Sus scrofa (Pig)).